We begin with the raw amino-acid sequence, 1103 residues long: Activity-dependent neuroprotector homeobox protein (1103 aa).

Glycyl lysine isopeptide (Lys-Gly) (interchain with G-Cter in SUMO2) cross-links involve residues K39 and K72. Residues 74 to 97 (FCCSACPFSSKFFSAYKSHFRNVH) form a C2H2-type 1; degenerate zinc finger. S98 is subject to Phosphoserine. Residues 107–129 (LNCPYCTFNADKKTLETHIKIFH) form a C2H2-type 2; degenerate zinc finger. The segment at 133 to 154 (SSAPSSSLSTFKDKNKNDGLKP) is disordered. Positions 143–154 (FKDKNKNDGLKP) are enriched in basic and acidic residues. Residues K144 and K155 each participate in a glycyl lysine isopeptide (Lys-Gly) (interchain with G-Cter in SUMO2) cross-link. A C2H2-type 3; degenerate zinc finger spans residues 165–188 (YYCKKCTYRDPLYEIVRKHIYREH). Residues K203, K231, K266, K274, K278, K279, K311, and K335 each participate in a glycyl lysine isopeptide (Lys-Gly) (interchain with G-Cter in SUMO2) cross-link. The C2H2-type 4; degenerate zinc-finger motif lies at 221–244 (IHCKRCLFMPKSYEALVQHVIEDH). R348 bears the Asymmetric dimethylarginine mark. Residues 354 to 361 (NAPVSIPQ) are neuroprotective peptide (NAP). The disordered stretch occupies residues 360-439 (PQQSQSVKQL…PAATGPPPSN (80 aa)). Glycyl lysine isopeptide (Lys-Gly) (interchain with G-Cter in SUMO2) cross-links involve residues K367 and K408. Over residues 393–423 (SLQTANTSSLPPGQVKSPSVSQSQASRVLGQ) the composition is skewed to polar residues. Phosphoserine is present on residues S409 and S413. A Glycyl lysine isopeptide (Lys-Gly) (interchain with G-Cter in SUMO2) cross-link involves residue K427. A compositionally biased stretch (pro residues) spans 427 to 438 (KPPPAATGPPPS). Residues 447-469 (KICTICNELFPENVYSVHFEKEH) form a C2H2-type 5; atypical zinc finger. C2H2-type zinc fingers lie at residues 489 to 510 (SKCL…MLIH) and 512 to 535 (LSCP…RMVH). Glycyl lysine isopeptide (Lys-Gly) (interchain with G-Cter in SUMO2) cross-links involve residues K600 and K606. Phosphoserine is present on S608. Glycyl lysine isopeptide (Lys-Gly) (interchain with G-Cter in SUMO2) cross-links involve residues K616, K621, K632, and K658. Residues 622-647 (TLCPLCFSILKGPISDALAHHLRERH) form a C2H2-type 8; atypical zinc finger. The segment at 662–686 (YKCIHCLGVYTSNMTASTITLHLVH) adopts a C2H2-type 9; atypical zinc-finger fold. The disordered stretch occupies residues 691–712 (GKTQNGQDKTNAPSRLNQSPGL). Residues 692–710 (KTQNGQDKTNAPSRLNQSP) show a composition bias toward polar residues. A Glycyl lysine isopeptide (Lys-Gly) (interchain with G-Cter in SUMO2) cross-link involves residue K699. A Phosphoserine modification is found at S709. Glycyl lysine isopeptide (Lys-Gly) (interchain with G-Cter in SUMO2) cross-links involve residues K716, K728, and K731. S738 is modified (phosphoserine). A Glycyl lysine isopeptide (Lys-Gly) (interchain with G-Cter in SUMO2) cross-link involves residue K745. The homeobox DNA-binding region spans 754–814 (LDPKGHEDDS…SNKRKKCVRD (61 aa)). The residue at position 805 (S805) is a Phosphoserine. Glycyl lysine isopeptide (Lys-Gly) (interchain with G-Cter in SUMO2) cross-links involve residues K807, K829, and K835. The tract at residues 873-1029 (DSFSDSFEHL…VQDDTEQLKW (157 aa)) is disordered. Phosphoserine is present on residues S876, S878, S886, S889, and S905. Residues K914, K929, and K936 each participate in a glycyl lysine isopeptide (Lys-Gly) (interchain with G-Cter in SUMO2) cross-link. Residues 922 to 954 (ESEKLDQKEEEDGSKYETIHLTEERAKLMHDAS) are compositionally biased toward basic and acidic residues. A phosphoserine mark is found at S954 and S956. Polar residues predominate over residues 972 to 982 (PSESGPGSRQV). Residue K1017 forms a Glycyl lysine isopeptide (Lys-Gly) (interchain with G-Cter in SUMO2) linkage. An N6-acetyllysine; alternate mark is found at K1036 and K1043. Residues K1036 and K1043 each participate in a glycyl lysine isopeptide (Lys-Gly) (interchain with G-Cter in SUMO2); alternate cross-link. Positions 1045–1103 (QSQWENASENAERLPNPQIEWQNSTIDSEDGEQFDSMTDGVADPMHGSLTGVKLSSQQA) are disordered. S1072 is modified (phosphoserine).

Interacts (via N-terminal region) with beta-catenin/CTNNB1 (via the central armadillo domains); interaction is direct and stabilizes CTNNB1 by modulating its phosphorylation by glycogen synthase kinase-3 beta GSK3B.

Its subcellular location is the nucleus. It localises to the chromosome. In terms of biological role, may be involved in transcriptional regulation. May mediate some of the neuroprotective peptide VIP-associated effects involving normal growth and cancer proliferation. Positively modulates WNT-beta-catenin/CTNN1B signaling, acting by regulating phosphorylation of, and thereby stabilizing, CTNNB1. May be required for neural induction and neuronal differentiation. May be involved in erythroid differentiation. In Rattus norvegicus (Rat), this protein is Activity-dependent neuroprotector homeobox protein (Adnp).